Consider the following 161-residue polypeptide: 3-isopropylmalate dehydratase small subunit (161 aa).

It belongs to the LeuD family. LeuD type 2 subfamily. In terms of assembly, heterodimer of LeuC and LeuD.

It catalyses the reaction (2R,3S)-3-isopropylmalate = (2S)-2-isopropylmalate. It functions in the pathway amino-acid biosynthesis; L-leucine biosynthesis; L-leucine from 3-methyl-2-oxobutanoate: step 2/4. In terms of biological role, catalyzes the isomerization between 2-isopropylmalate and 3-isopropylmalate, via the formation of 2-isopropylmaleate. In Pyrobaculum calidifontis (strain DSM 21063 / JCM 11548 / VA1), this protein is 3-isopropylmalate dehydratase small subunit.